The following is a 550-amino-acid chain: Methionine--tRNA ligase (550 aa).

A 'HIGH' region motif is present at residues 12 to 22 (PYANGPLHFGH). Zn(2+) contacts are provided by C144, C147, C157, and C160. The 'KMSKS' region motif lies at 330–334 (QFSKS). Residue K333 participates in ATP binding.

It belongs to the class-I aminoacyl-tRNA synthetase family. MetG type 1 subfamily. Monomer. It depends on Zn(2+) as a cofactor.

The protein localises to the cytoplasm. The enzyme catalyses tRNA(Met) + L-methionine + ATP = L-methionyl-tRNA(Met) + AMP + diphosphate. Its function is as follows. Is required not only for elongation of protein synthesis but also for the initiation of all mRNA translation through initiator tRNA(fMet) aminoacylation. This Chlamydia caviae (strain ATCC VR-813 / DSM 19441 / 03DC25 / GPIC) (Chlamydophila caviae) protein is Methionine--tRNA ligase.